A 233-amino-acid chain; its full sequence is Large ribosomal subunit protein bL19c (233 aa).

The N-terminal 77 residues, 1–77 (MASKVLPQAL…FPARNSFVVR (77 aa)), are a transit peptide targeting the chloroplast.

Component of the chloroplast large ribosomal subunit (LSU). Mature 70S chloroplast ribosomes of higher plants consist of a small (30S) and a large (50S) subunit. The 30S small subunit contains 1 molecule of ribosomal RNA (16S rRNA) and 24 different proteins. The 50S large subunit contains 3 rRNA molecules (23S, 5S and 4.5S rRNA) and 33 different proteins.

It is found in the plastid. Its subcellular location is the chloroplast. Its function is as follows. Component of the chloroplast ribosome (chloro-ribosome), a dedicated translation machinery responsible for the synthesis of chloroplast genome-encoded proteins, including proteins of the transcription and translation machinery and components of the photosynthetic apparatus. The sequence is that of Large ribosomal subunit protein bL19c (RPL19) from Spinacia oleracea (Spinach).